A 243-amino-acid chain; its full sequence is Carboxy-S-adenosyl-L-methionine synthase (243 aa).

S-adenosyl-L-methionine contacts are provided by residues tyrosine 35, 68 to 70 (GCS), 92 to 93 (DN), and arginine 199.

The protein belongs to the class I-like SAM-binding methyltransferase superfamily. Cx-SAM synthase family. Homodimer.

The catalysed reaction is prephenate + S-adenosyl-L-methionine = carboxy-S-adenosyl-L-methionine + 3-phenylpyruvate + H2O. Catalyzes the conversion of S-adenosyl-L-methionine (SAM) to carboxy-S-adenosyl-L-methionine (Cx-SAM). The polypeptide is Carboxy-S-adenosyl-L-methionine synthase (Helicobacter pylori (strain P12)).